The sequence spans 249 residues: Ribonuclease 3 (249 aa).

The RNase III domain maps to 20–149 (FKKFQERISV…FIGALYLDQG (130 aa)). Glu-62 provides a ligand contact to Mg(2+). Asp-66 is an active-site residue. Residues Asp-135 and Glu-138 each contribute to the Mg(2+) site. The active site involves Glu-138. The 70-residue stretch at 175 to 244 (DFKSQLQEFV…AQEALAKLQK (70 aa)) folds into the DRBM domain. The disordered stretch occupies residues 225-249 (RSKKEAEQHAAQEALAKLQKHHMKQ).

Belongs to the ribonuclease III family. Homodimer. It depends on Mg(2+) as a cofactor.

The protein localises to the cytoplasm. The catalysed reaction is Endonucleolytic cleavage to 5'-phosphomonoester.. In terms of biological role, digests double-stranded RNA. Involved in the processing of primary rRNA transcript to yield the immediate precursors to the large and small rRNAs (23S and 16S). Processes some mRNAs, and tRNAs when they are encoded in the rRNA operon. Processes pre-crRNA and tracrRNA of type II CRISPR loci if present in the organism. This Bacillus licheniformis (strain ATCC 14580 / DSM 13 / JCM 2505 / CCUG 7422 / NBRC 12200 / NCIMB 9375 / NCTC 10341 / NRRL NRS-1264 / Gibson 46) protein is Ribonuclease 3.